The sequence spans 228 residues: Large ribosomal subunit protein bL25 (228 aa).

A disordered region spans residues 198–228 (AAIAEAQSAEAAEEKAEAEAEATNEKNDTEE). A compositionally biased stretch (basic and acidic residues) spans 209-228 (AEEKAEAEAEATNEKNDTEE).

This sequence belongs to the bacterial ribosomal protein bL25 family. CTC subfamily. Part of the 50S ribosomal subunit; part of the 5S rRNA/L5/L18/L25 subcomplex. Contacts the 5S rRNA. Binds to the 5S rRNA independently of L5 and L18.

This is one of the proteins that binds to the 5S RNA in the ribosome where it forms part of the central protuberance. This Methylorubrum populi (strain ATCC BAA-705 / NCIMB 13946 / BJ001) (Methylobacterium populi) protein is Large ribosomal subunit protein bL25.